The following is a 157-amino-acid chain: 2-C-methyl-D-erythritol 2,4-cyclodiphosphate synthase (157 aa).

Residues aspartate 8 and histidine 10 each contribute to the a divalent metal cation site. 4-CDP-2-C-methyl-D-erythritol 2-phosphate-binding positions include 8–10 and 34–35; these read DVH and HS. Histidine 42 contacts a divalent metal cation. Residues 56 to 58, 61 to 65, 100 to 106, 132 to 135, and phenylalanine 139 each bind 4-CDP-2-C-methyl-D-erythritol 2-phosphate; these read DIG, FPDTD, AQKPKMA, and TTEE.

This sequence belongs to the IspF family. Homotrimer. A divalent metal cation serves as cofactor.

The catalysed reaction is 4-CDP-2-C-methyl-D-erythritol 2-phosphate = 2-C-methyl-D-erythritol 2,4-cyclic diphosphate + CMP. The protein operates within isoprenoid biosynthesis; isopentenyl diphosphate biosynthesis via DXP pathway; isopentenyl diphosphate from 1-deoxy-D-xylulose 5-phosphate: step 4/6. Its function is as follows. Involved in the biosynthesis of isopentenyl diphosphate (IPP) and dimethylallyl diphosphate (DMAPP), two major building blocks of isoprenoid compounds. Catalyzes the conversion of 4-diphosphocytidyl-2-C-methyl-D-erythritol 2-phosphate (CDP-ME2P) to 2-C-methyl-D-erythritol 2,4-cyclodiphosphate (ME-CPP) with a corresponding release of cytidine 5-monophosphate (CMP). This Clostridium novyi (strain NT) protein is 2-C-methyl-D-erythritol 2,4-cyclodiphosphate synthase.